We begin with the raw amino-acid sequence, 1002 residues long: yemanuclein (1002 aa).

Residues 80–85 carry the Nuclear localization signal motif; it reads KKKTKK. 3 disordered regions span residues 193 to 358, 395 to 428, and 642 to 725; these read AIIK…KKVV, VSTD…GQEN, and KLKA…AKQV. The segment covering 207–217 has biased composition (low complexity); sequence SSSSESSSSSS. Over residues 218–262 the composition is skewed to acidic residues; it reads GDDDENDDGNNEEDDESDSEDDSEENDESDSEDDSESESLEDEDS. 2 consecutive repeat copies span residues 230–241 and 242–253. Positions 230 to 253 are 2 X 12 AA tandem repeats; it reads EDDESDSEDDSEENDESDSEDDSE. Low complexity-rich tracts occupy residues 286-320, 336-358, and 395-404; these read TGKS…RPST, QPSS…KKVV, and VSTDVSSSDS. Residues 408–427 show a composition bias toward basic and acidic residues; sequence ESEHGRADRQAGQHGKDGQE. Over residues 653–667 the composition is skewed to low complexity; the sequence is PASASPKPVGVVSAP. Residues 679–689 show a composition bias toward basic and acidic residues; it reads AVEDPRSRGNS. Phosphoserine occurs at positions 685 and 689. The span at 690–701 shows a compositional bias: low complexity; that stretch reads DTDSATSASSNS. Residues serine 885, serine 886, and serine 887 each carry the phosphoserine modification. The segment at 901 to 928 is disordered; that stretch reads SKPQKKVQSKPKNKTQNRGRSSLGAVGQ. Residues 903 to 917 are compositionally biased toward basic residues; that stretch reads PQKKVQSKPKNKTQN.

The N-terminus is blocked. Oocyte specific.

It is found in the nucleus. The protein localises to the nucleoplasm. The protein resides in the chromosome. Its subcellular location is the centromere. It localises to the kinetochore. Its function is as follows. May play a key role in egg organization. May be a transcriptional regulator having a role in chromatin remodeling in concert with Hira, a histone chaperone. Involved in chromosome segregation by affecting kinetochores function in the first meiotic division. This chain is yemanuclein, found in Drosophila melanogaster (Fruit fly).